Consider the following 232-residue polypeptide: Ribosomal RNA small subunit methyltransferase G (232 aa).

S-adenosyl-L-methionine is bound by residues glycine 75, phenylalanine 80, 126–127, and arginine 143; that span reads AE.

It belongs to the methyltransferase superfamily. RNA methyltransferase RsmG family.

Its subcellular location is the cytoplasm. Functionally, specifically methylates the N7 position of a guanine in 16S rRNA. The sequence is that of Ribosomal RNA small subunit methyltransferase G from Fusobacterium nucleatum subsp. nucleatum (strain ATCC 25586 / DSM 15643 / BCRC 10681 / CIP 101130 / JCM 8532 / KCTC 2640 / LMG 13131 / VPI 4355).